The following is an 809-amino-acid chain: Poly(A) polymerase (809 aa).

The disordered stretch occupies residues 1–50; it reads MNKNGGPPVANITTSSTTITSTTTTQAKSQLPSSLSVNNLHTTQGSTDQP. Residues 12 to 25 are compositionally biased toward low complexity; sequence ITTSSTTITSTTTT. A compositionally biased stretch (polar residues) spans 26 to 50; the sequence is QAKSQLPSSLSVNNLHTTQGSTDQP. Residues 133–135, 146–148, Asp200, Lys262, Tyr271, and 280–281 each bind ATP; these read FGS, DID, and GV. Mg(2+) contacts are provided by Asp146, Asp148, and Asp200. Disordered regions lie at residues 529–760 and 785–809; these read FVKD…QQIQ and ISSS…IRGN. The span at 530-540 shows a compositional bias: basic and acidic residues; the sequence is VKDEGPEEPVK. Low complexity predominate over residues 572-655; that stretch reads SPITTNINST…TPPTTTTINS (84 aa). The span at 656–665 shows a compositional bias: polar residues; sequence VQPPSAQPTE. The span at 666–706 shows a compositional bias: low complexity; the sequence is NGSSTSNSPTSTSINNTALPPNPTTNSESTIETTITLPTTL. Residues 707 to 735 are compositionally biased toward polar residues; it reads ESQTSTLKDSNEISTNGTAVATEPTITSP. Low complexity-rich tracts occupy residues 736–760 and 785–794; these read SVNI…QQIQ and ISSSSETSQS.

Belongs to the poly(A) polymerase family. It depends on Mg(2+) as a cofactor. The cofactor is Mn(2+).

The protein resides in the nucleus. It carries out the reaction RNA(n) + ATP = RNA(n)-3'-adenine ribonucleotide + diphosphate. In terms of biological role, polymerase that creates the 3'-poly(A) tail of mRNA's. May acquire specificity through interaction with a cleavage and polyadenylation factor. The polypeptide is Poly(A) polymerase (papA) (Dictyostelium discoideum (Social amoeba)).